Reading from the N-terminus, the 406-residue chain is Ribose-phosphate pyrophosphokinase 3, mitochondrial (406 aa).

The disordered stretch occupies residues 1 to 32 (MAATPHRHLLQPCKNPAISSSETLKPSSSFSL). The N-terminal 87 residues, 1–87 (MAATPHRHLL…RRFQMSSNQE (87 aa)), are a transit peptide targeting the mitochondrion. Positions 18 to 32 (ISSSETLKPSSSFSL) are enriched in low complexity. Residues Asp-226 and His-228 each contribute to the Mg(2+) site. A binding of phosphoribosylpyrophosphate region spans residues 309-324 (GRHVVIVDDLVQSGGT).

The protein belongs to the ribose-phosphate pyrophosphokinase family.

The protein resides in the mitochondrion. The enzyme catalyses D-ribose 5-phosphate + ATP = 5-phospho-alpha-D-ribose 1-diphosphate + AMP + H(+). The protein is Ribose-phosphate pyrophosphokinase 3, mitochondrial (PRS3) of Spinacia oleracea (Spinach).